Reading from the N-terminus, the 126-residue chain is Acidic phospholipase A2 S1E6-b (126 aa).

A signal peptide spans 1-3 (VEG). Intrachain disulfides connect Cys-29-Cys-119, Cys-31-Cys-47, Cys-46-Cys-98, Cys-52-Cys-126, Cys-53-Cys-91, Cys-60-Cys-84, and Cys-78-Cys-89. Ca(2+) is bound by residues Tyr-30, Gly-32, and Gly-34. Residue His-50 is part of the active site. Asp-51 contacts Ca(2+). Asp-92 is an active-site residue.

In terms of assembly, homodimer. Ca(2+) is required as a cofactor. As to expression, expressed by the venom gland.

Its subcellular location is the secreted. The enzyme catalyses a 1,2-diacyl-sn-glycero-3-phosphocholine + H2O = a 1-acyl-sn-glycero-3-phosphocholine + a fatty acid + H(+). Functionally, snake venom phospholipase that inhibits ADP-induced platelet aggregation. PLA2 catalyzes the calcium-dependent hydrolysis of the 2-acyl groups in 3-sn-phosphoglycerides. In Calloselasma rhodostoma (Malayan pit viper), this protein is Acidic phospholipase A2 S1E6-b.